The chain runs to 198 residues: NAD(P)H dehydrogenase (quinone) (198 aa).

Residues 4-190 (ILVLYYSMYG…ILASFQGAHV (187 aa)) form the Flavodoxin-like domain. FMN-binding positions include 10–15 (SMYGHI) and 79–81 (TRF). Tyr12 lines the NAD(+) pocket. Trp99 contributes to the substrate binding site. FMN contacts are provided by residues 114–119 (STGTGG) and His134.

Belongs to the WrbA family. FMN serves as cofactor.

The catalysed reaction is a quinone + NADH + H(+) = a quinol + NAD(+). The enzyme catalyses a quinone + NADPH + H(+) = a quinol + NADP(+). This Azotobacter vinelandii (strain DJ / ATCC BAA-1303) protein is NAD(P)H dehydrogenase (quinone).